We begin with the raw amino-acid sequence, 309 residues long: MVKVYAPASSANMSVGFDVLGAAVTPVDGTLLGDVVSVEAANHFRLHNLGRFADKLPPEPRENIVYQCWERFCQALGKTIPVAMTLEKNMPIGSGLGSSACSVVAALVAMNEHCGKPLNDTRLLALMGELEGRISGSIHYDNVAPCFLGGMQLMIEENGIISQQVPGFDEWLWVLAYPGIKVSTAEARAILPAQYRRQDCIAHGRHLAGFIHACYSRQPQLAAALMKDVIAEPYRARLLPGFSQARQAVSEIGALASGISGSGPTLFALCDKPETAQRVADWLSKHYLQNQEGFVHICRLDTAGARVVG.

91 to 101 (PIGSGLGSSAC) lines the ATP pocket.

The protein belongs to the GHMP kinase family. Homoserine kinase subfamily.

The protein localises to the cytoplasm. It carries out the reaction L-homoserine + ATP = O-phospho-L-homoserine + ADP + H(+). It participates in amino-acid biosynthesis; L-threonine biosynthesis; L-threonine from L-aspartate: step 4/5. Functionally, catalyzes the ATP-dependent phosphorylation of L-homoserine to L-homoserine phosphate. The sequence is that of Homoserine kinase from Salmonella dublin (strain CT_02021853).